Consider the following 126-residue polypeptide: Large ribosomal subunit protein bL17 (126 aa).

This sequence belongs to the bacterial ribosomal protein bL17 family. As to quaternary structure, part of the 50S ribosomal subunit. Contacts protein L32.

This chain is Large ribosomal subunit protein bL17, found in Xylella fastidiosa (strain Temecula1 / ATCC 700964).